Consider the following 69-residue polypeptide: Large ribosomal subunit protein bL31 (69 aa).

Cys-16, Cys-18, Cys-37, and Cys-40 together coordinate Zn(2+).

This sequence belongs to the bacterial ribosomal protein bL31 family. Type A subfamily. As to quaternary structure, part of the 50S ribosomal subunit. The cofactor is Zn(2+).

Its function is as follows. Binds the 23S rRNA. The polypeptide is Large ribosomal subunit protein bL31 (Teredinibacter turnerae (strain ATCC 39867 / T7901)).